We begin with the raw amino-acid sequence, 226 residues long: Chalcone--flavanone isomerase (226 aa).

Positions 47, 112, and 189 each coordinate substrate.

The protein belongs to the chalcone isomerase family.

The enzyme catalyses a chalcone = a flavanone.. It participates in secondary metabolite biosynthesis; flavonoid biosynthesis. Its function is as follows. Catalyzes the intramolecular cyclization of bicyclic chalcones into tricyclic (S)-flavanones. Responsible for the isomerization of 4,2',4',6'-tetrahydroxychalcone (also termed chalcone) into naringenin. This is Chalcone--flavanone isomerase (CHI) from Allium cepa (Onion).